A 442-amino-acid chain; its full sequence is MPRDRRKFYIHTFGCQMNQADSGIIAALLEQDGYQQASSEEEAGIIMLNTCAVRENAVERIAHYLQHVKGFKRKCPELLVGLTGCIPQYRREELFTVFPVIDFLAGPDTYRVLPVLIAEAGKGRAARLDFNPFETYDGVTQARTQSLTAFVPIMRGCNNMCAFCVVPFTRGRERSHPFGSVLDEVRALAESGCREITLLGQNVNSYHDSQSGADFSRLLDAVSREAPETRIRFTTSHPKDMSHSLVETMASRPNICNHLHLPVQSGSTRMLARMNRGHDIEDYRNKIELLRERIPGISLSTDLIAGFCGESDADHCQTLELMREVRFDSAFMFYYSVRPGTLAARTMPDDVPEEVKKQRLQEIIDLQNGISAELLRLAIGSVVEVLVESESRRSSDQLMGRTGGNRVVVFDRGIHQPGDMVRVMITGSTSATLIGRAAENQH.

The MTTase N-terminal domain occupies 6–122 (RKFYIHTFGC…LPVLIAEAGK (117 aa)). [4Fe-4S] cluster-binding residues include C15, C51, C85, C157, C161, and C164. The Radical SAM core domain occupies 143 to 373 (RTQSLTAFVP…IDLQNGISAE (231 aa)). Residues 376–439 (RLAIGSVVEV…SATLIGRAAE (64 aa)) form the TRAM domain.

It belongs to the methylthiotransferase family. MiaB subfamily. As to quaternary structure, monomer. The cofactor is [4Fe-4S] cluster.

It is found in the cytoplasm. It carries out the reaction N(6)-dimethylallyladenosine(37) in tRNA + (sulfur carrier)-SH + AH2 + 2 S-adenosyl-L-methionine = 2-methylsulfanyl-N(6)-dimethylallyladenosine(37) in tRNA + (sulfur carrier)-H + 5'-deoxyadenosine + L-methionine + A + S-adenosyl-L-homocysteine + 2 H(+). Catalyzes the methylthiolation of N6-(dimethylallyl)adenosine (i(6)A), leading to the formation of 2-methylthio-N6-(dimethylallyl)adenosine (ms(2)i(6)A) at position 37 in tRNAs that read codons beginning with uridine. The protein is tRNA-2-methylthio-N(6)-dimethylallyladenosine synthase of Chlorobium limicola (strain DSM 245 / NBRC 103803 / 6330).